The sequence spans 323 residues: Acetyl esterase (323 aa).

An Involved in the stabilization of the negatively charged intermediate by the formation of the oxyanion hole motif is present at residues His-91–Gly-93. Catalysis depends on residues Ser-165, Asp-262, and His-292.

This sequence belongs to the 'GDXG' lipolytic enzyme family. Homodimer. Interacts with MalT and MelA.

The protein localises to the cytoplasm. Its function is as follows. Displays esterase activity towards short chain fatty esters (acyl chain length of up to 8 carbons). Able to hydrolyze triacetylglycerol (triacetin) and tributyrylglycerol (tributyrin), but not trioleylglycerol (triolein) or cholesterol oleate. Negatively regulates MalT activity by antagonizing maltotriose binding. Inhibits MelA galactosidase activity. This is Acetyl esterase from Salmonella paratyphi A (strain AKU_12601).